The chain runs to 255 residues: MALPDFSMRQLLEAGVHFGHQTHRWNPKMKPYIFGDRNNIHIIDLAQTVPMLSRALQVVSDTVARGGRVLFVGTKRQASEIIADSAKRSAQYYVNSRWLGGMMTNWKTISNSIQRLRKVDEILNSEGSGYSKKERLTLEREREKLEKALGGIRDMGGVPDLMFIIDTNKEKIAIEEAKRLGIPVVAIIDSNCDPDHIDYPIPGNDDASRAISLYCDLIARAAIDGIARQQGASGRDIGASEEAPIEPALEDEAGA.

A disordered region spans residues 232-255; sequence ASGRDIGASEEAPIEPALEDEAGA.

Belongs to the universal ribosomal protein uS2 family.

The sequence is that of Small ribosomal subunit protein uS2 from Agrobacterium fabrum (strain C58 / ATCC 33970) (Agrobacterium tumefaciens (strain C58)).